We begin with the raw amino-acid sequence, 39 residues long: Photosystem I reaction center subunit IX (39 aa).

Residues 7 to 27 (FLTTAPVAFILFSSFVFALFI) form a helical membrane-spanning segment.

This sequence belongs to the PsaJ family.

It localises to the cellular thylakoid membrane. In terms of biological role, may help in the organization of the PsaE and PsaF subunits. In Synechococcus sp. (strain JA-3-3Ab) (Cyanobacteria bacterium Yellowstone A-Prime), this protein is Photosystem I reaction center subunit IX.